Consider the following 129-residue polypeptide: MRHRKSGRHLSRTSAHRKAMFQNMAVSLFEHELIKTTLPKAKELRRVAEPLITLAKEDSVANRRLAFDRTRSKAAVGKLFNDLGKRYATRQGGYLRILKCGFRAGDNAPMAYVELVDRPVAGEVEAAAE.

Belongs to the bacterial ribosomal protein bL17 family. As to quaternary structure, part of the 50S ribosomal subunit. Contacts protein L32.

This chain is Large ribosomal subunit protein bL17, found in Stutzerimonas stutzeri (strain A1501) (Pseudomonas stutzeri).